Here is a 152-residue protein sequence, read N- to C-terminus: Early glycoprotein GP48 (152 aa).

A signal peptide spans 1–25 (MVMMLRTWRLLPMVLLAAYCYCVFG). N-linked (GlcNAc...) asparagine; by host glycans are attached at residues N48, N53, N61, N69, N108, N112, N122, N139, and N148.

This sequence belongs to the RL11 family. In terms of processing, N-glycosylated and possibly O-glycosylated.

Its subcellular location is the virion membrane. In Homo sapiens (Human), this protein is Early glycoprotein GP48 (UL4).